Here is a 310-residue protein sequence, read N- to C-terminus: Putative carbonic anhydrase 5 (310 aa).

The first 20 residues, 1–20 (MPSHLLVLSLLVALLVVVSC), serve as a signal peptide directing secretion. Residues 26 to 280 (HGWGYDENNG…LNGRRIQYRP (255 aa)) enclose the Alpha-carbonic anhydrase domain. The Zn(2+) site is built by His117, His119, and His142. 223–224 (TT) contributes to the substrate binding site.

The protein belongs to the alpha-carbonic anhydrase family.

It is found in the secreted. The enzyme catalyses hydrogencarbonate + H(+) = CO2 + H2O. Reversible hydration of carbon dioxide. The chain is Putative carbonic anhydrase 5 (cah-5) from Caenorhabditis elegans.